We begin with the raw amino-acid sequence, 660 residues long: Pseudouridylate synthase 7 homolog (660 aa).

The tract at residues 1 to 99 (MEMTSTSLKR…EAGEEEEAES (99 aa)) is disordered. Phosphoserine is present on Ser7. Over residues 22–32 (TPHDETKKQKV) the composition is skewed to basic and acidic residues. Acidic residues predominate over residues 76-99 (QEEEEEEEEEDGLSEAGEEEEAES). Ser126 carries the phosphoserine modification. The active-site Nucleophile is the Asp293. A TRUD domain is found at 369 to 579 (GFINYYGMQR…SGAYRRIIIR (211 aa)).

The protein belongs to the pseudouridine synthase TruD family. As to quaternary structure, interacts with SIRT1.

It is found in the nucleus. The catalysed reaction is a uridine in tRNA = a pseudouridine in tRNA. It catalyses the reaction uridine(13) in tRNA = pseudouridine(13) in tRNA. The enzyme catalyses a uridine in mRNA = a pseudouridine in mRNA. Functionally, pseudouridylate synthase that catalyzes pseudouridylation of RNAs. Acts as a regulator of protein synthesis in embryonic stem cells by mediating pseudouridylation of RNA fragments derived from tRNAs (tRFs): pseudouridylated tRFs inhibit translation by targeting the translation initiation complex. Also catalyzes pseudouridylation of mRNAs: mediates pseudouridylation of mRNAs with the consensus sequence 5'-UGUAG-3'. Acts as a regulator of pre-mRNA splicing by mediating pseudouridylation of pre-mRNAs at locations associated with alternatively spliced regions. Pseudouridylation of pre-mRNAs near splice sites directly regulates mRNA splicing and mRNA 3'-end processing. In addition to mRNAs and tRNAs, binds other types of RNAs, such as snRNAs, Y RNAs and vault RNAs, suggesting that it can catalyze pseudouridylation of many RNA types. In Mus musculus (Mouse), this protein is Pseudouridylate synthase 7 homolog.